A 103-amino-acid polypeptide reads, in one-letter code: MESEEMLAGGLTEPRPATPEIQEIANKVKPQLEEKTNKTYEKFEAIIYRSQVVAGTNYYIKVHVGGNNYVHIRVFQSLPHQEDPLKLIGYQVDKTKDDELTGF.

Methionine 1 is subject to Blocked amino end (Met); partial. The interval 1–20 (MESEEMLAGGLTEPRPATPE) is disordered. The Secondary area of contact motif lies at 51-55 (QVVAG).

The protein belongs to the cystatin family.

The protein resides in the cytoplasm. Potent inhibitor of cathepsins L and S, and papain. The chain is Leukocyte cysteine proteinase inhibitor 1 from Sus scrofa (Pig).